A 609-amino-acid polypeptide reads, in one-letter code: Phosphomethylpyrimidine synthase (609 aa).

Substrate is bound by residues asparagine 219, methionine 248, tyrosine 277, histidine 313, 333–335 (SRG), 374–377 (DGLR), and glutamate 413. Histidine 417 lines the Zn(2+) pocket. Tyrosine 440 lines the substrate pocket. Histidine 481 is a binding site for Zn(2+). Positions 561, 564, and 569 each coordinate [4Fe-4S] cluster.

It belongs to the ThiC family. The cofactor is [4Fe-4S] cluster.

The enzyme catalyses 5-amino-1-(5-phospho-beta-D-ribosyl)imidazole + S-adenosyl-L-methionine = 4-amino-2-methyl-5-(phosphooxymethyl)pyrimidine + CO + 5'-deoxyadenosine + formate + L-methionine + 3 H(+). It functions in the pathway cofactor biosynthesis; thiamine diphosphate biosynthesis. Catalyzes the synthesis of the hydroxymethylpyrimidine phosphate (HMP-P) moiety of thiamine from aminoimidazole ribotide (AIR) in a radical S-adenosyl-L-methionine (SAM)-dependent reaction. The chain is Phosphomethylpyrimidine synthase from Deinococcus geothermalis (strain DSM 11300 / CIP 105573 / AG-3a).